The following is a 410-amino-acid chain: Peptidase T (410 aa).

H79 lines the Zn(2+) pocket. D81 is an active-site residue. Position 142 (D142) interacts with Zn(2+). The Proton acceptor role is filled by E176. E177, D199, and H381 together coordinate Zn(2+).

The protein belongs to the peptidase M20B family. The cofactor is Zn(2+).

It is found in the cytoplasm. The enzyme catalyses Release of the N-terminal residue from a tripeptide.. Its function is as follows. Cleaves the N-terminal amino acid of tripeptides. The chain is Peptidase T from Bacillus licheniformis (strain ATCC 14580 / DSM 13 / JCM 2505 / CCUG 7422 / NBRC 12200 / NCIMB 9375 / NCTC 10341 / NRRL NRS-1264 / Gibson 46).